Consider the following 1199-residue polypeptide: Tubulin monoglutamylase TTLL4 (1199 aa).

Over residues 1–25 (MASAGTQHYSIGLRQKNSFKQSGPS) the composition is skewed to polar residues. Disordered stretches follow at residues 1–43 (MASA…RVWP), 472–517 (IQLG…ELVD), and 525–544 (RDENEEEEGDSECSSLSAVS). The span at 477–495 (SEKERPEEARELDSSDRDI) shows a compositional bias: basic and acidic residues. The segment covering 506-517 (AETEDTEEELVD) has biased composition (acidic residues). In terms of domain architecture, TTL spans 604-947 (RKLLRWKMST…VLPNAEDIIS (344 aa)). The residue at position 691 (serine 691) is a Phosphoserine. Residues lysine 721, 727 to 728 (RG), 749 to 752 (QRYL), and 762 to 764 (KFD) contribute to the ATP site. Arginine 727 is an a protein binding site. Residue arginine 788 coordinates L-glutamate. 809-810 (TN) is an ATP binding site. L-glutamate contacts are provided by tyrosine 811, serine 812, and lysine 833. The Mg(2+) site is built by aspartate 893, glutamate 906, and asparagine 908. Residues 918–1029 (PLDISIKGQM…RGQFERIFPS (112 aa)) form a c-MTBD region region. Lysine 924 is a binding site for L-glutamate. Positions 1130 to 1141 (GTTPKSKKTQAG) are enriched in polar residues. Residues 1130–1199 (GTTPKSKKTQ…ISDSLLAVSP (70 aa)) are disordered. Basic and acidic residues predominate over residues 1151 to 1160 (SSKDSEDTSK). Positions 1164–1192 (LSTQTLPVIKCSGQTSRLSASSTFQSISD) are enriched in polar residues.

It belongs to the tubulin--tyrosine ligase family. Requires Mg(2+) as cofactor.

The protein resides in the cytoplasm. It is found in the cell projection. The protein localises to the cilium. Its subcellular location is the cytoskeleton. It localises to the cilium basal body. The enzyme catalyses L-glutamyl-[protein] + L-glutamate + ATP = gamma-L-glutamyl-L-glutamyl-[protein] + ADP + phosphate + H(+). Functionally, monoglutamylase which modifies both tubulin and non-tubulin proteins, adding a single glutamate on the gamma-carboxyl group of specific glutamate residues of target proteins. Involved in the side-chain initiation step of the polyglutamylation reaction but not in the elongation step. Preferentially modifies beta-tail tubulin over the alpha-tubulin. Monoglutamylates nucleosome assembly proteins NAP1L1 and NAP1L4. Monoglutamylates nucleotidyltransferase CGAS, leading to inhibition of CGAS catalytic activity, thereby preventing antiviral defense function. Involved in KLF4 glutamylation which impedes its ubiquitination, thereby leading to somatic cell reprogramming, pluripotency maintenance and embryogenesis. The sequence is that of Tubulin monoglutamylase TTLL4 from Homo sapiens (Human).